A 603-amino-acid polypeptide reads, in one-letter code: Glutathione-regulated potassium-efflux system protein KefB (603 aa).

13 consecutive transmembrane segments (helical) span residues Ala5 to Ala25, Ile29 to Phe49, Val53 to Leu73, Ile87 to Tyr107, Ser115 to Met135, Val152 to Gly172, Trp180 to Arg202, Phe207 to Gly227, Leu230 to Leu250, Gly268 to Tyr288, Ile291 to Phe311, Phe326 to Ser346, and Pro356 to Ile376. The region spanning Glu400–Ser521 is the RCK N-terminal domain.

The protein belongs to the monovalent cation:proton antiporter 2 (CPA2) transporter (TC 2.A.37) family. KefB subfamily. As to quaternary structure, interacts with the regulatory subunit KefG.

Its subcellular location is the cell inner membrane. Functionally, pore-forming subunit of a potassium efflux system that confers protection against electrophiles. Catalyzes K(+)/H(+) antiport. This chain is Glutathione-regulated potassium-efflux system protein KefB, found in Pectobacterium atrosepticum (strain SCRI 1043 / ATCC BAA-672) (Erwinia carotovora subsp. atroseptica).